The chain runs to 702 residues: Phosphoglycerol transferase I (702 aa).

Transmembrane regions (helical) follow at residues 2 to 22 (HWMLLVSLLLLLWLLVASPRL), 71 to 91 (FSGYIAVFVGMLLLSLSPLLL), and 103 to 123 (GGAVFAGFVGMLLVGIAASPL).

It belongs to the OpgB family.

Its subcellular location is the cell inner membrane. It catalyses the reaction a phosphatidylglycerol + a membrane-derived-oligosaccharide D-glucose = a 1,2-diacyl-sn-glycerol + a membrane-derived-oligosaccharide 6-(glycerophospho)-D-glucose.. The protein operates within glycan metabolism; osmoregulated periplasmic glucan (OPG) biosynthesis. Functionally, transfers a phosphoglycerol residue from phosphatidylglycerol to the membrane-bound nascent glucan backbones. The protein is Phosphoglycerol transferase I of Xanthomonas euvesicatoria pv. vesicatoria (strain 85-10) (Xanthomonas campestris pv. vesicatoria).